The following is a 219-amino-acid chain: Probable N-acetyltransferase camello (219 aa).

The next 2 helical transmembrane spans lie at 44-64 (FITF…VLAL) and 66-86 (SLVA…HGLA). One can recognise an N-acetyltransferase domain in the interval 62-211 (LALTSLVALL…VHQYTSFTVA (150 aa)).

This sequence belongs to the camello family.

The protein resides in the golgi apparatus membrane. In terms of biological role, plays a role in regulation of gastrulation, possibly by controlled reduction of cell adhesion in the periblastopore region which is necessary for optimal cell motility. The chain is Probable N-acetyltransferase camello from Xenopus tropicalis (Western clawed frog).